Here is a 688-residue protein sequence, read N- to C-terminus: Protein SDA1 homolog (688 aa).

3 positions are modified to phosphoserine: Ser-232, Ser-234, and Ser-236. Residues Lys-254–Met-318 are a coiled coil. The segment covering Val-484–Trp-498 has biased composition (acidic residues). A disordered region spans residues Val-484–Gln-524. The segment covering Val-514–Gln-524 has biased composition (basic and acidic residues). Ser-586 and Ser-596 each carry phosphoserine. A disordered region spans residues Lys-605–Lys-688. Over residues Ser-668–Leu-681 the composition is skewed to basic and acidic residues.

Belongs to the SDA1 family.

It is found in the nucleus. Its subcellular location is the nucleolus. Its function is as follows. Required for 60S pre-ribosomal subunits export to the cytoplasm. In Bos taurus (Bovine), this protein is Protein SDA1 homolog (SDAD1).